A 169-amino-acid chain; its full sequence is MICOS complex subunit MIC19 (169 aa).

G2 carries the N-myristoyl glycine lipid modification. Positions 123-165 (ENVCQDNENEIVRCLQENPGRVLKCAPLTEAFEKCVGEFRQQV) constitute a CHCH domain. Short sequence motifs (cx9C motif) lie at residues 126 to 136 (CQDNENEIVRC) and 147 to 157 (CAPLTEAFEKC). Disulfide bonds link C126–C157 and C136–C147.

It belongs to the MICOS complex subunit Mic19 family. Metazoan Mic19 subfamily. As to quaternary structure, component of the mitochondrial contact site and cristae organizing system (MICOS) complex.

It localises to the mitochondrion inner membrane. In terms of biological role, plays a role in maintaining mitochondrial morphology. May act as a component of the MICOS complex, a large protein complex of the mitochondria. In Caenorhabditis elegans, this protein is MICOS complex subunit MIC19.